The primary structure comprises 298 residues: Nucleotide-binding protein Dred_3054 (298 aa).

20–27 (GMSGAGKT) lines the ATP pocket. 71-74 (DIRG) provides a ligand contact to GTP.

This sequence belongs to the RapZ-like family.

Functionally, displays ATPase and GTPase activities. This chain is Nucleotide-binding protein Dred_3054, found in Desulforamulus reducens (strain ATCC BAA-1160 / DSM 100696 / MI-1) (Desulfotomaculum reducens).